Here is a 323-residue protein sequence, read N- to C-terminus: Pantothenate kinase (323 aa).

An ATP-binding site is contributed by 101 to 108; the sequence is GSVAVGKS.

This sequence belongs to the prokaryotic pantothenate kinase family.

Its subcellular location is the cytoplasm. The enzyme catalyses (R)-pantothenate + ATP = (R)-4'-phosphopantothenate + ADP + H(+). It participates in cofactor biosynthesis; coenzyme A biosynthesis; CoA from (R)-pantothenate: step 1/5. The polypeptide is Pantothenate kinase (Paenarthrobacter aurescens (strain TC1)).